A 429-amino-acid polypeptide reads, in one-letter code: Glutamate-1-semialdehyde 2,1-aminomutase 2 (429 aa).

N6-(pyridoxal phosphate)lysine is present on Lys268.

It belongs to the class-III pyridoxal-phosphate-dependent aminotransferase family. HemL subfamily. Homodimer. Pyridoxal 5'-phosphate is required as a cofactor.

It localises to the cytoplasm. The catalysed reaction is (S)-4-amino-5-oxopentanoate = 5-aminolevulinate. It functions in the pathway porphyrin-containing compound metabolism; protoporphyrin-IX biosynthesis; 5-aminolevulinate from L-glutamyl-tRNA(Glu): step 2/2. The polypeptide is Glutamate-1-semialdehyde 2,1-aminomutase 2 (Staphylococcus aureus (strain MRSA252)).